The sequence spans 320 residues: Cytochrome f (320 aa).

Residues 1-35 (MENRNTFSWVKEQITRSISVSIMIYVITRTSISNA) form the signal peptide. The heme site is built by Tyr-36, Cys-56, Cys-59, and His-60. Residues 286–306 (VQGLLFFFASVILAQVFLVLK) form a helical membrane-spanning segment.

It belongs to the cytochrome f family. As to quaternary structure, the 4 large subunits of the cytochrome b6-f complex are cytochrome b6, subunit IV (17 kDa polypeptide, petD), cytochrome f and the Rieske protein, while the 4 small subunits are PetG, PetL, PetM and PetN. The complex functions as a dimer. It depends on heme as a cofactor.

The protein localises to the plastid. It localises to the chloroplast thylakoid membrane. Component of the cytochrome b6-f complex, which mediates electron transfer between photosystem II (PSII) and photosystem I (PSI), cyclic electron flow around PSI, and state transitions. The polypeptide is Cytochrome f (Hordeum vulgare (Barley)).